Reading from the N-terminus, the 847-residue chain is Lethal(3)malignant brain tumor-like protein 1 (847 aa).

2 stretches are compositionally biased toward basic and acidic residues: residues 65–82 and 144–155; these read FPRE…EKGV and AVKEGHAKKDGD. Disordered regions lie at residues 65 to 87, 142 to 163, and 237 to 296; these read FPRE…SEPI, AEAV…PTSR, and VKKR…SEEK. MBT repeat units lie at residues 300–400, 408–507, and 516–611; these read WSWA…LQPP, FSWT…LTPP, and FIWE…LQPP. The interval 473–480 is interaction with monomethylated and dimethylated peptides; that stretch reads FDNWDDTY. A CCHHC-type zinc finger spans residues 639-682; that stretch reads SKYSFHHRKCPTPGCDGSGHVTGRFTAHYCLSGCPLAEKNQGKL. Zn(2+)-binding residues include Cys648, Cys653, His666, and Cys672. One can recognise an SAM domain in the interval 778–842; the sequence is WTIDEVFSFV…YNAILMFKNA (65 aa).

Homodimer.

The protein localises to the nucleus. Its function is as follows. Polycomb group (PcG) protein that specifically recognizes and binds mono- and dimethyllysine residues on target proteins, thereby acting as a 'reader' of a network of post-translational modifications. PcG proteins maintain the transcriptionally repressive state of genes: acts as a chromatin compaction factor by recognizing and binding mono- and dimethylated histone H1b/H1-4 at 'Lys-26' (H1bK26me1 and H1bK26me2) and histone H4 at 'Lys-20' (H4K20me1 and H4K20me2), leading to condense chromatin and repress transcription. In Gallus gallus (Chicken), this protein is Lethal(3)malignant brain tumor-like protein 1 (L3MBTL1).